A 369-amino-acid polypeptide reads, in one-letter code: Cyclic AMP receptor-like protein A (369 aa).

The Extracellular portion of the chain corresponds to 1–4 (MIQI). The chain crosses the membrane as a helical span at residues 5–22 (LLSTFISFIIIIVSSNDI). Residues 23 to 72 (RSGENDNFNNNKMINNFLTTITTNDTIIIKETESPNDYDFSKEQIESLDK) are Cytoplasmic-facing. The chain crosses the membrane as a helical span at residues 73-93 (IVYFSSTMGIVGALFIIVSFF). Over 94-100 (LFKAART) the chain is Extracellular. The helical transmembrane segment at 101–121 (FATKMIFFLSLSDLFAAIFYL) threads the bilayer. Residues 122 to 146 (PYYRDSDIMCNLQGMGLVFFLSSSY) are Cytoplasmic-facing. Residues 147-167 (LWTMCISISLFMVFFTTIFEL) traverse the membrane as a helical segment. Topologically, residues 168 to 173 (NHWFKY) are extracellular. A helical transmembrane segment spans residues 174 to 194 (FHFICWGIPLFTAIISLIFHA). Residues 195-212 (YGKTGSWCFISDPTSIFR) lie on the Cytoplasmic side of the membrane. Residues 213–233 (LLYYLPLIVVFFINLVVFIAI) form a helical membrane-spanning segment. Over 234 to 247 (RWKISQHSNSLVSR) the chain is Extracellular. The helical transmembrane segment at 248-268 (VNIIVSFYLIAFSLSQLPTII) threads the bilayer. Topologically, residues 269–369 (NSIQNFSDPD…KLIIDDYNRV (101 aa)) are cytoplasmic.

It belongs to the G-protein coupled receptor 5 family.

Its subcellular location is the membrane. In terms of biological role, receptor for cAMP which may play a role in prestalk cell differentiation. May act as a negative regulator of cell growth. The chain is Cyclic AMP receptor-like protein A (crlA) from Dictyostelium discoideum (Social amoeba).